An 82-amino-acid polypeptide reads, in one-letter code: UPF0298 protein SMU_1670c (82 aa).

Belongs to the UPF0298 family.

The protein localises to the cytoplasm. This Streptococcus mutans serotype c (strain ATCC 700610 / UA159) protein is UPF0298 protein SMU_1670c.